The following is a 247-amino-acid chain: C-type lectin domain family 7 member A (247 aa).

Residues 1–44 (MEYHPDLENLDEDGYTQLHFDSQSNTRIAVVSEKGSCAASPPWR) are Cytoplasmic-facing. Positions 15–18 (YTQL) match the ITAM-like motif. A helical; Signal-anchor for type II membrane protein transmembrane segment spans residues 45–65 (LIAVILGILCLVILVIAVVLG). Over 66-247 (TMAIWRSNSG…YSICEKKFSM (182 aa)) the chain is Extracellular. N91 carries N-linked (GlcNAc...) asparagine glycosylation. Intrachain disulfides connect C120/C131, C148/C241, and C220/C233. The region spanning 127–242 (YEKSCYLFSM…CSVPSYSICE (116 aa)) is the C-type lectin domain. 146–153 (RQCWQLGS) provides a ligand contact to (1,3-beta-D-glucosyl)n. A divalent metal cation-binding residues include K157, D159, and E163. Position 195 (E195) interacts with (1,3-beta-D-glucosyl)n. E242 lines the a divalent metal cation pocket.

As to quaternary structure, homodimer. Interacts with SYK; participates in leukocyte activation in presence of fungal pathogens. Interacts with CD37; this interaction controls CLEC7A-mediated IL-6 production. In terms of assembly, interacts with RANBP9. In terms of processing, phosphorylated on tyrosine residues in response to beta-glucan binding. As to expression, highly expressed in peripheral blood leukocytes and dendritic cells. Detected in spleen, bone marrow, lung, muscle, stomach and placenta.

Its subcellular location is the cell membrane. The protein localises to the cytoplasm. Its function is as follows. Lectin that functions as a pattern recognizing receptor (PRR) specific for beta-1,3-linked and beta-1,6-linked glucans, which constitute cell wall constituents from pathogenic bacteria and fungi. Necessary for the TLR2-mediated inflammatory response and activation of NF-kappa-B: upon beta-glucan binding, recruits SYK via its ITAM motif and promotes a signaling cascade that activates some CARD domain-BCL10-MALT1 (CBM) signalosomes, leading to the activation of NF-kappa-B and MAP kinase p38 (MAPK11, MAPK12, MAPK13 and/or MAPK14) pathways which stimulate expression of genes encoding pro-inflammatory cytokines and chemokines. Enhances cytokine production in macrophages and dendritic cells. Mediates production of reactive oxygen species in the cell. Mediates phagocytosis of C.albicans conidia. Binds T-cells in a way that does not involve their surface glycans and plays a role in T-cell activation. Stimulates T-cell proliferation. Induces phosphorylation of SCIMP after binding beta-glucans. The polypeptide is C-type lectin domain family 7 member A (Homo sapiens (Human)).